Consider the following 405-residue polypeptide: Probable tRNA sulfurtransferase (405 aa).

The region spanning 60–165 (VPVAESLKQI…EEAAYLSYEN (106 aa)) is the THUMP domain. ATP contacts are provided by residues 183–184 (ML), 208–209 (HF), Arg-265, Gly-287, and Gln-296.

It belongs to the ThiI family.

It is found in the cytoplasm. It catalyses the reaction [ThiI sulfur-carrier protein]-S-sulfanyl-L-cysteine + a uridine in tRNA + 2 reduced [2Fe-2S]-[ferredoxin] + ATP + H(+) = [ThiI sulfur-carrier protein]-L-cysteine + a 4-thiouridine in tRNA + 2 oxidized [2Fe-2S]-[ferredoxin] + AMP + diphosphate. The catalysed reaction is [ThiS sulfur-carrier protein]-C-terminal Gly-Gly-AMP + S-sulfanyl-L-cysteinyl-[cysteine desulfurase] + AH2 = [ThiS sulfur-carrier protein]-C-terminal-Gly-aminoethanethioate + L-cysteinyl-[cysteine desulfurase] + A + AMP + 2 H(+). It functions in the pathway cofactor biosynthesis; thiamine diphosphate biosynthesis. In terms of biological role, catalyzes the ATP-dependent transfer of a sulfur to tRNA to produce 4-thiouridine in position 8 of tRNAs, which functions as a near-UV photosensor. Also catalyzes the transfer of sulfur to the sulfur carrier protein ThiS, forming ThiS-thiocarboxylate. This is a step in the synthesis of thiazole, in the thiamine biosynthesis pathway. The sulfur is donated as persulfide by IscS. In Streptococcus mutans serotype c (strain ATCC 700610 / UA159), this protein is Probable tRNA sulfurtransferase.